The following is a 149-amino-acid chain: MKVILLHALEKLGKKGQLITVKNGYARNYLIPLEKALLATSENIKIFEKKRLFEEQQEAKKIDYANSRIKAIKLIGAIIFFMKSSKKRKIFGSIGVKDISKQLISLGLLIKKNEIKLPNGLLHYLGSHTVLFTPYKNISTEFKVVILSK.

The protein belongs to the bacterial ribosomal protein bL9 family.

In terms of biological role, binds to the 23S rRNA. In Buchnera aphidicola subsp. Cinara cedri (strain Cc), this protein is Large ribosomal subunit protein bL9.